Reading from the N-terminus, the 395-residue chain is Succinate--CoA ligase [ADP-forming] subunit beta (395 aa).

Residues 9-240 (RDVFEKHGVP…AASADPLEAK (232 aa)) form the ATP-grasp domain. ATP contacts are provided by residues Lys49, 56 to 58 (GRG), Ala98, and Glu103. Mg(2+) is bound by residues Asn195 and Asp209. Substrate contacts are provided by residues Asn260 and 322 to 324 (GIT).

It belongs to the succinate/malate CoA ligase beta subunit family. Heterotetramer of two alpha and two beta subunits. The cofactor is Mg(2+).

The enzyme catalyses succinate + ATP + CoA = succinyl-CoA + ADP + phosphate. The catalysed reaction is GTP + succinate + CoA = succinyl-CoA + GDP + phosphate. The protein operates within carbohydrate metabolism; tricarboxylic acid cycle; succinate from succinyl-CoA (ligase route): step 1/1. Functionally, succinyl-CoA synthetase functions in the citric acid cycle (TCA), coupling the hydrolysis of succinyl-CoA to the synthesis of either ATP or GTP and thus represents the only step of substrate-level phosphorylation in the TCA. The beta subunit provides nucleotide specificity of the enzyme and binds the substrate succinate, while the binding sites for coenzyme A and phosphate are found in the alpha subunit. This Beutenbergia cavernae (strain ATCC BAA-8 / DSM 12333 / CCUG 43141 / JCM 11478 / NBRC 16432 / NCIMB 13614 / HKI 0122) protein is Succinate--CoA ligase [ADP-forming] subunit beta.